The chain runs to 84 residues: Anaphase-promoting complex subunit 11 (84 aa).

Residues cysteine 23, cysteine 26, cysteine 34, cysteine 37, cysteine 44, cysteine 51, histidine 53, histidine 56, histidine 58, cysteine 59, cysteine 73, and cysteine 76 each contribute to the Zn(2+) site. The segment at 34–77 adopts an RING-type zinc-finger fold; it reads CPDCKVPGDDCPLVWGQCSHCFHMHCILKWLNAQQVQQHCPMCR.

This sequence belongs to the RING-box family. The mammalian APC/C is composed at least of 14 distinct subunits ANAPC1, ANAPC2, CDC27/APC3, ANAPC4, ANAPC5, CDC16/APC6, ANAPC7, CDC23/APC8, ANAPC10, ANAPC11, CDC26/APC12, ANAPC13, ANAPC15 and ANAPC16 that assemble into a complex of at least 19 chains with a combined molecular mass of around 1.2 MDa; APC/C interacts with FZR1 and FBXO5. Interacts with the cullin domain of ANAPC2. Interacts with UBE2D2. Auto-ubiquitinated.

It is found in the cytoplasm. It localises to the nucleus. The protein operates within protein modification; protein ubiquitination. Functionally, together with the cullin protein ANAPC2, constitutes the catalytic component of the anaphase promoting complex/cyclosome (APC/C), a cell cycle-regulated E3 ubiquitin ligase that controls progression through mitosis and the G1 phase of the cell cycle. The APC/C complex acts by mediating ubiquitination and subsequent degradation of target proteins: it mainly mediates the formation of 'Lys-11'-linked polyubiquitin chains and, to a lower extent, the formation of 'Lys-48'- and 'Lys-63'-linked polyubiquitin chains. The APC/C complex catalyzes assembly of branched 'Lys-11'-/'Lys-48'-linked branched ubiquitin chains on target proteins. May recruit the E2 ubiquitin-conjugating enzymes to the complex. The polypeptide is Anaphase-promoting complex subunit 11 (ANAPC11) (Bos taurus (Bovine)).